The primary structure comprises 332 residues: Glyceraldehyde-3-phosphate dehydrogenase 2 (332 aa).

Residues 11–12, D32, and R77 contribute to the NAD(+) site; that span reads RI. Residues 148 to 150, T179, 208 to 209, and R231 each bind D-glyceraldehyde 3-phosphate; these read SCT and TG. The Nucleophile role is filled by C149. N313 provides a ligand contact to NAD(+).

Belongs to the glyceraldehyde-3-phosphate dehydrogenase family. In terms of assembly, homotetramer.

It localises to the cytoplasm. The enzyme catalyses D-glyceraldehyde 3-phosphate + phosphate + NAD(+) = (2R)-3-phospho-glyceroyl phosphate + NADH + H(+). Its pathway is carbohydrate degradation; glycolysis; pyruvate from D-glyceraldehyde 3-phosphate: step 1/5. In Drosophila pseudoobscura pseudoobscura (Fruit fly), this protein is Glyceraldehyde-3-phosphate dehydrogenase 2 (Gapdh2).